The primary structure comprises 446 residues: Plant intracellular Ras-group-related LRR protein 3 (446 aa).

Residues 65–100 adopt a coiled-coil conformation; sequence EACRAVVRLEETHDAYEALLQEAEGRLEAVYRSAME. The segment at 101–121 is disordered; the sequence is GKDLEEPDGRDESAAAAAGDD. LRR repeat units lie at residues 138-160, 161-184, 185-207, 208-230, 232-254, 255-277, 279-300, 301-324, 325-347, and 349-371; these read GKPV…AFGR, IQGL…IGGL, DHLE…IGLL, LNLR…ISKC, SLIE…GYEL, VNLR…ICEM, SLYL…IGKL, SSLE…SFGD, LLNL…NFGR, and DKLE…IVNK. The GVYW motif lies at 372–384; the sequence is GVDAVKEYMLQRW.

It belongs to the SHOC2 family. As to expression, widely expressed.

Functionally, leucine-rich repeat protein that likely mediates protein interactions, possibly in the context of signal transduction. This chain is Plant intracellular Ras-group-related LRR protein 3 (IRL3), found in Oryza sativa subsp. japonica (Rice).